The chain runs to 153 residues: uncharacterized protein (153 aa).

Residues 1–18 (MSARISKQLRLSVPPCLA) form the signal peptide. N-linked (GlcNAc...) asparagine glycosylation is found at asparagine 19 and asparagine 25. The Extracellular portion of the chain corresponds to 19–43 (NRTTASNSSSCVTEVEPLLQSFSST). Residues 44–64 (LVLIVLATVIFCLVVLSLSTF) form a helical membrane-spanning segment. Topologically, residues 65–153 (HMHKSKMKKR…EHLQQSVVLS (89 aa)) are cytoplasmic. The segment at 75 to 115 (KIEKAQEEYERDHCSPKAERGHLHGMGRGGTHGSPTSPTIQ) is disordered. A compositionally biased stretch (basic and acidic residues) spans 77–96 (EKAQEEYERDHCSPKAERGH).

It is found in the membrane. This is an uncharacterized protein from Xenopus tropicalis (Western clawed frog).